The sequence spans 576 residues: Lysine--tRNA ligase (576 aa).

2 residues coordinate Mg(2+): E412 and E419.

It belongs to the class-II aminoacyl-tRNA synthetase family. Homodimer. The cofactor is Mg(2+).

Its subcellular location is the cytoplasm. The enzyme catalyses tRNA(Lys) + L-lysine + ATP = L-lysyl-tRNA(Lys) + AMP + diphosphate. The sequence is that of Lysine--tRNA ligase from Parabacteroides distasonis (strain ATCC 8503 / DSM 20701 / CIP 104284 / JCM 5825 / NCTC 11152).